Here is a 341-residue protein sequence, read N- to C-terminus: Transcription factor ETV7 (341 aa).

One can recognise a PNT domain in the interval 33-117 (NLLGEGGICK…ELLQYIKTQR (85 aa)). The ETS DNA-binding region spans 224–305 (RLLWDYVYQL…PGQKLLFRFL (82 aa)). The interval 315–341 (KHSHLEPLESQEQDRIEFKDKRPEISP) is disordered.

It belongs to the ETS family. In terms of tissue distribution, expressed in hematopoietic tissues.

It localises to the nucleus. Functionally, transcriptional repressor; binds to the DNA sequence 5'-CCGGAAGT-3'. Isoform A does not seem to have a repressor activity. Isoform C does not seem to have a repressor activity. The chain is Transcription factor ETV7 (ETV7) from Homo sapiens (Human).